Reading from the N-terminus, the 99-residue chain is Small ribosomal subunit protein bS20 (99 aa).

This sequence belongs to the bacterial ribosomal protein bS20 family.

Binds directly to 16S ribosomal RNA. The protein is Small ribosomal subunit protein bS20 of Picosynechococcus sp. (strain ATCC 27264 / PCC 7002 / PR-6) (Agmenellum quadruplicatum).